The sequence spans 307 residues: Chlorophyll a-b binding protein 1, chloroplastic (307 aa).

A chloroplast-targeting transit peptide spans 1-44 (MAPYSVVASVLAAAPPQQSGSVRQLPSTINRAITQRSQSRHVAS). The segment at 34 to 54 (TQRSQSRHVASASSASSPTTM) is disordered. Positions 52, 63, 64, 65, 68, 81, 86, 89, 90, 91, and 92 each coordinate chlorophyll a. Leu-96 lines the loroxanthin pocket. A helical membrane pass occupies residues 111-143 (NYDESRLRWLLEGELYNGRLAMLAVVGVLTVEA). Residues Leu-120, Glu-124, Asn-127, Met-132, and Lys-146 each contribute to the chlorophyll a site. A loroxanthin-binding site is contributed by Trp-149. Glu-151, Tyr-163, His-171, Glu-178, Arg-181, Glu-190, Arg-198, and Asp-200 together coordinate chlorophyll a. Residues 161-186 (TPYVVAVVGGHLAFALLEKKRLENFR) form a helical membrane-spanning segment. Residues Asp-200 and Leu-202 each coordinate all-trans-violaxanthin. Chlorophyll a is bound by residues Leu-204, Asn-208, Tyr-214, Asn-215, Ala-218, Asn-222, and Arg-224. The helical transmembrane segment at 213–238 (DYNRQAEVRNCRLAMLTFLGFSVQAW) threads the bilayer. Residue Phe-230 participates in loroxanthin binding. Phe-233 is an all-trans-violaxanthin binding site. Chlorophyll a is bound at residue Gln-236. Pro-244 provides a ligand contact to all-trans-violaxanthin. 8 residues coordinate chlorophyll a: Asn-247, His-251, Pro-255, Phe-256, Ala-258, Asn-259, Ile-260, and Phe-274. The helical transmembrane segment at 265–289 (DRGTNVVAIFSAFAAVMHIAELARE) threads the bilayer.

This sequence belongs to the light-harvesting chlorophyll a/b-binding (LHC) protein family. As to quaternary structure, homooligomer. Component of a light-harvesting complex (LHC) consisting of 11 chlorophyll a-b binding proteins. The cofactor is Binds 11 chlorophylls (Chl-a and Chl-b) and the 2 carotenoids violaxanthin and loroxanthin..

The protein resides in the plastid. It localises to the chloroplast thylakoid membrane. Functionally, component of a light-harvesting complex (LHC). The LHC functions as a light receptor, it captures and delivers excitation energy to photosystems with which it is closely associated. Functions in a far-red LHC by absorbing far-red light and promoting photosystem II (PSII) excitation, likely with entropy-driven uphill excitation energy transfer. Exhibits a typical absorption band at 671 nm (Qy band), as well as a large far-red absorption band at 706.5 together with fluorescence emission at around 713 nm (F713). The polypeptide is Chlorophyll a-b binding protein 1, chloroplastic (Prasiola crispa (Green alga)).